The chain runs to 99 residues: Acylphosphatase-2 (99 aa).

S2 bears the N-acetylserine mark. The 91-residue stretch at 9–99 (SVDYEVFGRV…LEYSSFNIRY (91 aa)) folds into the Acylphosphatase-like domain. Active-site residues include R24 and N42. Residue S93 is modified to Phosphoserine.

This sequence belongs to the acylphosphatase family.

The catalysed reaction is an acyl phosphate + H2O = a carboxylate + phosphate + H(+). Its physiological role is not yet clear. The chain is Acylphosphatase-2 (ACYP2) from Bos taurus (Bovine).